The primary structure comprises 1042 residues: FHIP family protein AAEL005291 (1042 aa).

Residues 1-14 show a composition bias toward polar residues; sequence MSWLRSSPLRQSFS. 4 disordered regions span residues 1–31, 494–514, 821–866, and 905–977; these read MSWL…GGNS, NNTS…PQGG, PHSG…KRND, and SNSS…GSPH. The segment covering 839-859 has biased composition (polar residues); it reads VSMTSNLSQTTPMQLTPSSSY. Low complexity-rich tracts occupy residues 905–940 and 956–976; these read SNSS…FMGS and PSIG…TGSP.

It belongs to the FHIP family.

This is FHIP family protein AAEL005291 from Aedes aegypti (Yellowfever mosquito).